We begin with the raw amino-acid sequence, 131 residues long: ATP synthase epsilon chain (131 aa).

It belongs to the ATPase epsilon chain family. As to quaternary structure, F-type ATPases have 2 components, CF(1) - the catalytic core - and CF(0) - the membrane proton channel. CF(1) has five subunits: alpha(3), beta(3), gamma(1), delta(1), epsilon(1). CF(0) has three main subunits: a, b and c.

It is found in the cell membrane. Its function is as follows. Produces ATP from ADP in the presence of a proton gradient across the membrane. This Bacillus pumilus (strain SAFR-032) protein is ATP synthase epsilon chain.